A 168-amino-acid chain; its full sequence is Ribosome maturation factor RimP (168 aa).

The protein belongs to the RimP family.

It is found in the cytoplasm. Its function is as follows. Required for maturation of 30S ribosomal subunits. This Syntrophobacter fumaroxidans (strain DSM 10017 / MPOB) protein is Ribosome maturation factor RimP.